Consider the following 176-residue polypeptide: PKHD-type hydroxylase Mfla_0096 (176 aa).

In terms of domain architecture, Fe2OG dioxygenase spans 78-147 (KVFPPLFNRY…NQIARGTYGA (70 aa)).

The cofactor is Fe(2+). L-ascorbate serves as cofactor.

The sequence is that of PKHD-type hydroxylase Mfla_0096 from Methylobacillus flagellatus (strain ATCC 51484 / DSM 6875 / VKM B-1610 / KT).